Reading from the N-terminus, the 214-residue chain is Adenylate kinase (214 aa).

10–15 (GAGKGT) contacts ATP. The interval 30–59 (ATGDVLRAAVKEGTPLGLEAKAAMDRGDLV) is NMP. Residues T31, R36, 57-59 (DLV), and Q92 each bind AMP. Residues 126–161 (GRTTCEACQRPFFGRQPGETCTEGGVSGTLVRRKDD) are LID. Residue R127 participates in ATP binding. Positions 158 and 169 each coordinate AMP. Residue G198 coordinates ATP.

Belongs to the adenylate kinase family. In terms of assembly, monomer.

It localises to the cytoplasm. It carries out the reaction AMP + ATP = 2 ADP. The protein operates within purine metabolism; AMP biosynthesis via salvage pathway; AMP from ADP: step 1/1. Functionally, catalyzes the reversible transfer of the terminal phosphate group between ATP and AMP. Plays an important role in cellular energy homeostasis and in adenine nucleotide metabolism. The polypeptide is Adenylate kinase (Gemmatimonas aurantiaca (strain DSM 14586 / JCM 11422 / NBRC 100505 / T-27)).